We begin with the raw amino-acid sequence, 318 residues long: Ethylene-responsive transcription factor FZP (318 aa).

Over residues 1-15 (MNTRGSGSSSSSSSS) the composition is skewed to low complexity. Disordered regions lie at residues 1 to 59 (MNTR…GRFL) and 158 to 178 (SYGH…SGAS). Pro residues predominate over residues 25–37 (PPKPASQPSPPSS). Positions 57–114 (RFLGVRRRPWGRYAAEIRDPTTKERHWLGTFDTAQEAALAYDRAALSMKGAQARTNFV) form a DNA-binding region, AP2/ERF. The segment covering 160–171 (GHHHHHHHHHGH) has biased composition (basic residues).

This sequence belongs to the AP2/ERF transcription factor family. ERF subfamily.

The protein localises to the nucleus. Required to prevent the formation of axillary meristems within the spikelet meristem and permit the subsequent establishment of floral meristem identity. Mediates the transition from spikelet to floret meristem. Determines the transition from panicle branching to spikelet formation. May specify floral organ identity by regulating the class B genes (Agamous-like genes) MADS6 and MADS17, as well as class E genes MADS1, MADS7 and MADS8 in floral meristem. Possesses transactivation activity. The sequence is that of Ethylene-responsive transcription factor FZP from Oryza sativa subsp. japonica (Rice).